The primary structure comprises 58 residues: Sperm histone P2b (58 aa).

The tract at residues 20–41 (LRRRRYRSSRRRRRRPCRRRRH) is disordered.

The protein belongs to the protamine P2 family. In terms of tissue distribution, testis.

It localises to the nucleus. It is found in the chromosome. Its function is as follows. Protamines substitute for histones in the chromatin of sperm during the haploid phase of spermatogenesis. They compact sperm DNA into a highly condensed, stable and inactive complex. This chain is Sperm histone P2b, found in Equus caballus (Horse).